A 427-amino-acid chain; its full sequence is DNA topoisomerase 6 subunit A (427 aa).

One can recognise a Topo IIA-type catalytic domain in the interval 76-209 (LSLSSVQTEI…LNVIAAEKGV (134 aa)). Tyr-170 functions as the O-(5'-phospho-DNA)-tyrosine intermediate in the catalytic mechanism. Mg(2+) contacts are provided by Glu-256 and Asp-308.

Belongs to the TOP6A family. Homodimer. Heterotetramer of two TOP6A and two TOP6B subunits. Interacts with BIN4 and RHL1. Mg(2+) is required as a cofactor. Highly expressed in leaves, stems, flowers and seedlings.

It localises to the nucleus. The enzyme catalyses ATP-dependent breakage, passage and rejoining of double-stranded DNA.. Its function is as follows. Component of the DNA topoisomerase VI involved in chromatin organization and progression of endoreduplication cycles. Relaxes both positive and negative superturns and exhibits a strong decatenase activity. Involved in cell-elongation processes. This Arabidopsis thaliana (Mouse-ear cress) protein is DNA topoisomerase 6 subunit A.